An 89-amino-acid polypeptide reads, in one-letter code: Small ribosomal subunit protein uS15 (89 aa).

This sequence belongs to the universal ribosomal protein uS15 family. As to quaternary structure, part of the 30S ribosomal subunit. Forms a bridge to the 50S subunit in the 70S ribosome, contacting the 23S rRNA.

One of the primary rRNA binding proteins, it binds directly to 16S rRNA where it helps nucleate assembly of the platform of the 30S subunit by binding and bridging several RNA helices of the 16S rRNA. Functionally, forms an intersubunit bridge (bridge B4) with the 23S rRNA of the 50S subunit in the ribosome. The sequence is that of Small ribosomal subunit protein uS15 from Shewanella baltica (strain OS185).